The sequence spans 370 residues: Putative F-box/kelch-repeat protein At3g46050 (370 aa).

In terms of domain architecture, F-box spans 15-61 (PTSFSSLPDDIVLNCLARVSRFHYPTLSLVCKGFRSLLDSRELHATR). Kelch repeat units follow at residues 119–165 (KIYI…VIND) and 167–212 (IYVI…VPGS).

The protein is Putative F-box/kelch-repeat protein At3g46050 of Arabidopsis thaliana (Mouse-ear cress).